Reading from the N-terminus, the 303-residue chain is MTLRHISVLKEEAISFLNINPNGVYVDATLGQGGHTLSILNHLQDGFLYSFDQDLKACSDIQKKLNPNWPIEIIHSNFSNLKLELAKRNVFQLDGILFDLGISSCQIDDSQRGFSYLHNAPLDMRFDNRQKLTAQEIVNFYSFEKLKNIFHIYGEEKKAALIAKQIIKNRPLKTSYDLVAITDMFYKYHKGHSAKKIFQALRIEVNQELEVLKQALSQSLELLKKDGSIVVISFHSLEDRIVKHFFKKNSVFEFPKKLPIMSVDYPQPALRIITKKPCIPSEVEMKNNPRSISAKLRAAVKNI.

Residues 33–35 (GGH), D52, F78, D99, and Q106 each bind S-adenosyl-L-methionine.

Belongs to the methyltransferase superfamily. RsmH family.

It localises to the cytoplasm. It catalyses the reaction cytidine(1402) in 16S rRNA + S-adenosyl-L-methionine = N(4)-methylcytidine(1402) in 16S rRNA + S-adenosyl-L-homocysteine + H(+). In terms of biological role, specifically methylates the N4 position of cytidine in position 1402 (C1402) of 16S rRNA. The protein is Ribosomal RNA small subunit methyltransferase H of Phytoplasma australiense.